Consider the following 438-residue polypeptide: Probable tRNA pseudouridine synthase D (438 aa).

D86 acts as the Nucleophile in catalysis. The region spanning 165 to 390 (GVPNFFGIQR…SKGTRRELLL (226 aa)) is the TRUD domain.

This sequence belongs to the pseudouridine synthase TruD family.

The catalysed reaction is uridine(13) in tRNA = pseudouridine(13) in tRNA. In terms of biological role, could be responsible for synthesis of pseudouridine from uracil-13 in transfer RNAs. The protein is Probable tRNA pseudouridine synthase D of Methanosarcina barkeri (strain Fusaro / DSM 804).